A 242-amino-acid chain; its full sequence is MTKLFIPYIMGNKDLIENATLLSENGADIIEIGVPFSDPVADGPVIMEAGQQAIKQGITIDYIFNQLEKHGDQIKCNYVLMTYYNIICHYGEQAFFEKCRDTGVYGLIIPDLPYELSQRLKQQFSHYGVKIISLVAMTTDDKRIKDIVSHAEGFIYTVTMNATTGQNGAFHPELKRKIESIKAIANVPVVAGFGIRTPQHVADIKEVADGIVIGSEIVKRFKSNTREEIIKYLQSIQQTLNN.

Catalysis depends on proton acceptor residues Glu-31 and Asp-42.

Belongs to the TrpA family. Tetramer of two alpha and two beta chains.

The enzyme catalyses (1S,2R)-1-C-(indol-3-yl)glycerol 3-phosphate + L-serine = D-glyceraldehyde 3-phosphate + L-tryptophan + H2O. Its pathway is amino-acid biosynthesis; L-tryptophan biosynthesis; L-tryptophan from chorismate: step 5/5. In terms of biological role, the alpha subunit is responsible for the aldol cleavage of indoleglycerol phosphate to indole and glyceraldehyde 3-phosphate. This chain is Tryptophan synthase alpha chain, found in Staphylococcus aureus (strain USA300).